Reading from the N-terminus, the 498-residue chain is Lysine--tRNA ligase (498 aa).

Glu409 and Glu416 together coordinate Mg(2+).

Belongs to the class-II aminoacyl-tRNA synthetase family. Homodimer. Requires Mg(2+) as cofactor.

Its subcellular location is the cytoplasm. The enzyme catalyses tRNA(Lys) + L-lysine + ATP = L-lysyl-tRNA(Lys) + AMP + diphosphate. The chain is Lysine--tRNA ligase from Coxiella burnetii (strain CbuK_Q154) (Coxiella burnetii (strain Q154)).